The following is a 72-amino-acid chain: Metallothionein-like protein type 2 (72 aa).

This sequence belongs to the metallothionein superfamily. Type 15 family.

In terms of biological role, metallothioneins have a high content of cysteine residues that bind various heavy metals. This chain is Metallothionein-like protein type 2, found in Solanum lycopersicum (Tomato).